A 33-amino-acid chain; its full sequence is Gastrin (33 aa).

Pyrrolidone carboxylic acid is present on glutamine 1. Sulfotyrosine is present on tyrosine 28. Phenylalanine 33 bears the Phenylalanine amide mark.

This sequence belongs to the gastrin/cholecystokinin family. Post-translationally, sulfation enhances proteolytic processing, and blocks peptide degradation. Levels of sulfation differ between proteolytically-cleaved gastrins and between tissues.

It localises to the secreted. Gastrin stimulates the stomach mucosa to produce and secrete hydrochloric acid and the pancreas to secrete its digestive enzymes. It also stimulates smooth muscle contraction and increases blood circulation and water secretion in the stomach and intestine. This Macropus giganteus (Eastern gray kangaroo) protein is Gastrin (GAST).